Consider the following 346-residue polypeptide: Sulfate/thiosulfate import ATP-binding protein CysA (346 aa).

One can recognise an ABC transporter domain in the interval 3–237 (VRVANVRKEF…PNSPFVYGFI (235 aa)). Residue 35 to 42 (GPSGSGKT) participates in ATP binding.

It belongs to the ABC transporter superfamily. Sulfate/tungstate importer (TC 3.A.1.6) family. As to quaternary structure, the complex is composed of two ATP-binding proteins (CysA), two transmembrane proteins (CysT and CysW) and a solute-binding protein (CysP).

Its subcellular location is the cell inner membrane. The enzyme catalyses sulfate(out) + ATP + H2O = sulfate(in) + ADP + phosphate + H(+). The catalysed reaction is thiosulfate(out) + ATP + H2O = thiosulfate(in) + ADP + phosphate + H(+). Part of the ABC transporter complex CysAWTP involved in sulfate/thiosulfate import. Responsible for energy coupling to the transport system. This Mesorhizobium japonicum (strain LMG 29417 / CECT 9101 / MAFF 303099) (Mesorhizobium loti (strain MAFF 303099)) protein is Sulfate/thiosulfate import ATP-binding protein CysA.